Reading from the N-terminus, the 256-residue chain is Triosephosphate isomerase (256 aa).

Residue 10–12 coordinates substrate; sequence NWK. His97 acts as the Electrophile in catalysis. Glu169 functions as the Proton acceptor in the catalytic mechanism. Substrate contacts are provided by residues Gly175, Ser214, and 235–236; that span reads GG.

It belongs to the triosephosphate isomerase family. In terms of assembly, homodimer.

It is found in the cytoplasm. The enzyme catalyses D-glyceraldehyde 3-phosphate = dihydroxyacetone phosphate. The protein operates within carbohydrate biosynthesis; gluconeogenesis. It participates in carbohydrate degradation; glycolysis; D-glyceraldehyde 3-phosphate from glycerone phosphate: step 1/1. Its function is as follows. Involved in the gluconeogenesis. Catalyzes stereospecifically the conversion of dihydroxyacetone phosphate (DHAP) to D-glyceraldehyde-3-phosphate (G3P). This Actinobacillus pleuropneumoniae serotype 7 (strain AP76) protein is Triosephosphate isomerase.